The sequence spans 382 residues: Galactokinase (382 aa).

Substrate is bound at residue 34 to 37 (EHTD). Position 124-130 (124-130 (GAGLSSS)) interacts with ATP. The Mg(2+) site is built by serine 130 and glutamate 162. The active-site Proton acceptor is aspartate 174. Tyrosine 223 is a binding site for substrate.

Belongs to the GHMP kinase family. GalK subfamily.

The protein localises to the cytoplasm. It catalyses the reaction alpha-D-galactose + ATP = alpha-D-galactose 1-phosphate + ADP + H(+). The protein operates within carbohydrate metabolism; galactose metabolism. Its function is as follows. Catalyzes the transfer of the gamma-phosphate of ATP to D-galactose to form alpha-D-galactose-1-phosphate (Gal-1-P). This is Galactokinase from Escherichia fergusonii (strain ATCC 35469 / DSM 13698 / CCUG 18766 / IAM 14443 / JCM 21226 / LMG 7866 / NBRC 102419 / NCTC 12128 / CDC 0568-73).